Consider the following 438-residue polypeptide: Coenzyme A disulfide reductase (438 aa).

Position 8-33 (8-33) interacts with FAD; it reads GAVAGGATCASQIRRLDKESDIIIFE. Residues threonine 15, glutamine 19, arginine 22, serine 39, and asparagine 42 each coordinate substrate. Cysteine 43 functions as the Nucleophile in the catalytic mechanism. Catalysis depends on cysteine 43, which acts as the Redox-active. Substrate is bound at residue lysine 71. 151 to 166 is an NADP(+) binding site; sequence VLVIGAGYVSLEVLEN. 267 to 277 is a binding site for FAD; that stretch reads TNVPNIYAIGD. Position 299 (histidine 299) interacts with substrate. FAD is bound at residue tyrosine 419. Substrate is bound at residue lysine 427.

The protein belongs to the class-III pyridine nucleotide-disulfide oxidoreductase family. Homodimer. FAD is required as a cofactor.

It catalyses the reaction NADP(+) + 2 CoA = CoA-disulfide + NADPH + H(+). Its function is as follows. Catalyzes specifically the NADPH-dependent reduction of coenzyme A disulfide. The polypeptide is Coenzyme A disulfide reductase (Staphylococcus aureus (strain Mu3 / ATCC 700698)).